The following is a 115-amino-acid chain: UPF0738 protein SACOL1009 (115 aa).

Belongs to the UPF0738 family.

This chain is UPF0738 protein SACOL1009, found in Staphylococcus aureus (strain COL).